Here is a 1066-residue protein sequence, read N- to C-terminus: MTWKNFGFEIFGEKYGQEELEKRIKDEHTPPPDSPVFGGLKLKLKKEKFKTLFTLGTTLKGFRRATHTVGTGGIGEITIVNDPKFPEHEFFTAGRTFPARLRHANLKYPDDAGADARSFSIKFADSDSDGPLDIVMNTGEANIFWNSPSLEDFVPVEEGDAAEEYVYKNPYYYYNLVEALRRAPDTFAHLYYYSQVTMPFKAKDGKVRYCRYRALPGDVDIKEEDESGRLTEEEQRKIWIFSRHENEKRPDDYLRKEYVERLQKGPVNYRLQIQIHEASPDDTATIFHAGILWDKETHPWFDLAKVSIKTPLSPDVLEKTAFNIANQPASLGLLEAKSPEDYNSIGELRVAVYTWVQHLRKLKIGSLVPAGQNAIYNVEVETGDREHAGTDATITIRITGAKGRTDYLKLDKWFHNDFEAGSKEQYTVQGFDVGDIQLIELHSDGGGYWSGDPDWFVNRVIIISSTQDRVYSFPCFRWVIKDMVLFPGEATLPFNEVPAIVSEQRQKELEQRKLTYQWDYVSDDMPGNIKAKTHDDLPRDVQFTDEKSRSYQESRKAALVNLGIGSLFTMFENWDSYDDYHILYRNWILGGTPNMADRWHEDRWFGYQFLNGANPVILTRCDALPSNFPVTNEHVNASLDRGKNLDEEIKDGHIYIVDFKVLVGAKSYGGPVLEDIGYKVPDHLKHDEADIRYCAAPLALFYVNKLGHLMPIAIQINQEPGPENPIWTPHEENEHDWMMAKFWLGVAESNFHQLNTHLLRTHLTTESFALSTWRNLASAHPVFKLLQPHIYGVLAIDTIGRKELIGSGGIVDQSLSLGGGGHVTFMEKCFKEVNLQDYHLPNALKKRGVDDPSKLPGFYYRDDGLALWEAIETFIGEIIAIFYKNDDDVKRDNEIQSWIYDVHKNGWRVNPGHQDHGVPASFESREQLKEVLTSLVFTFSCQHAAVNFSQKDHYGFTPNAPAVLRHPPPKKKGEATLQSILSTLPSKSQAAKAIATVYILTKFSEDERYLGNYSATAWEDKDALDAINRFQDKLEDISKKIKQRNENLEVPYIYLLPERIPNGTAI.

The tract at residues 1-371 (MTWKNFGFEI…LKIGSLVPAG (371 aa)) is allene oxide synthase. Heme is bound at residue Tyr353. Positions 372–1066 (QNAIYNVEVE…PERIPNGTAI (695 aa)) are arachidonate 8-lipoxygenase. One can recognise a PLAT domain in the interval 374–490 (AIYNVEVETG…KDMVLFPGEA (117 aa)). Ca(2+) is bound by residues His387, Gly389, Thr390, Asp391, Asn416, Asp417, Glu419, Asp452, and Asp454. The Lipoxygenase domain occupies 491–1066 (TLPFNEVPAI…PERIPNGTAI (576 aa)). Residues His757, His762, His943, Asn947, and Ile1066 each coordinate Fe cation.

This sequence in the C-terminal section; belongs to the lipoxygenase family. As to quaternary structure, dimer. Ca(2+) serves as cofactor. Fe cation is required as a cofactor. Requires heme as cofactor.

The protein localises to the cytoplasm. It is found in the membrane. The enzyme catalyses (5Z,8Z,11Z,14Z)-eicosatetraenoate + O2 = (8R)-hydroperoxy-(5Z,9E,11Z,14Z)-eicosatetraenoate. It carries out the reaction (8R)-hydroperoxy-(5Z,9E,11Z,14Z)-eicosatetraenoate = 8,9-epoxy-(5Z,9E,11Z,14Z)-eicosatetraenoate + H2O. It catalyses the reaction (5Z,8Z,11Z,14Z,17Z)-eicosapentaenoate + O2 = (8R)-hydroperoxy-(5Z,9E,11Z,14Z,17Z)-eicosapentaenoate. The catalysed reaction is (4Z,7Z,10Z,13Z,16Z,19Z)-docosahexaenoate + O2 = 10-hydroperoxy-(4Z,7Z,11E,13Z,16Z,19Z)-docosahexaenoate. The enzyme catalyses (8Z,11Z,14Z)-eicosatrienoate + O2 = (8R)-hydroperoxy-(9E,11Z,14Z)-eicosatrienoate. It carries out the reaction (8Z,11Z,14Z)-eicosatrienoate + O2 = 10-hydroperoxy-(8Z,11Z,14Z)-eicosatrienoate. It catalyses the reaction (8Z,11Z,14Z)-eicosatrienoate + O2 = 11-hydroperoxy-(8Z,12E,14Z)-eicosatrienoate. Its pathway is lipid metabolism; arachidonate metabolism. The protein operates within lipid metabolism; fatty acid metabolism. Lipoxygenase activity is stimulated by calcium, sodium, lithium and potassium ions. Calcium binding promotes interaction with membranes and thus facilitates access to substrates. In terms of biological role, bifunctional enzyme which is responsible for allene oxide biosynthesis via a two-step reaction; first the lipoxygenase reaction that converts polyunsaturated fatty acids such as arachidonate ((5Z,8Z,11Z,14Z)-eicosatetraenoate) into a (8R)-hydroperoxide intermediate ((8R)-hydroperoxy-(5Z,9E,11Z,14Z)-eicosatetraenoate) followed by the allene oxide synthase reaction that converts the hydroperoxide intermediate ((8R)-hydroperoxy-(5Z,9E,11Z,14Z)-eicosatetraenoate) into the allene oxide (8,9-epoxy-(5Z,9E,11Z,14Z)-eicosatetraenoate). Shows preference for C20 or C22 highly polyunsaturated fatty acids and no activity with C18 fatty acids in vitro. Fatty acid allene oxides are intermediates in the formation of cyclopentenones or hydrolytic products in marine systems, most notably the prostanoid-related clavulones. This is Allene oxide synthase-lipoxygenase protein from Plexaura homomalla (Black sea rod).